The primary structure comprises 190 residues: Protein hunchback (190 aa).

Disordered stretches follow at residues 13 to 59 (EPMS…SSNL), 86 to 110 (AAMT…PNPM), and 142 to 190 (QTND…KYMA). Residues 17–31 (HHHHHSHHHGHHHML) are compositionally biased toward basic residues. The segment covering 90 to 100 (PSPSNNDQNSP) has biased composition (polar residues). Residues 171–190 (EPEKDHDLISNSSEDMKYMA) show a composition bias toward basic and acidic residues.

The protein belongs to the hunchback C2H2-type zinc-finger protein family.

It is found in the nucleus. In terms of biological role, gap class segmentation protein that controls development of head structures. This chain is Protein hunchback (hb), found in Scaptomyza crassifemur (Fruit fly).